The primary structure comprises 362 residues: Chorismate synthase (362 aa).

Arg-47 is an NADP(+) binding site. FMN is bound by residues 124 to 126 (RAS), Gly-286, 301 to 305 (KPTAT), and Arg-327.

It belongs to the chorismate synthase family. As to quaternary structure, homotetramer. The cofactor is FMNH2.

It carries out the reaction 5-O-(1-carboxyvinyl)-3-phosphoshikimate = chorismate + phosphate. Its pathway is metabolic intermediate biosynthesis; chorismate biosynthesis; chorismate from D-erythrose 4-phosphate and phosphoenolpyruvate: step 7/7. Functionally, catalyzes the anti-1,4-elimination of the C-3 phosphate and the C-6 proR hydrogen from 5-enolpyruvylshikimate-3-phosphate (EPSP) to yield chorismate, which is the branch point compound that serves as the starting substrate for the three terminal pathways of aromatic amino acid biosynthesis. This reaction introduces a second double bond into the aromatic ring system. The chain is Chorismate synthase from Prochlorococcus marinus (strain MIT 9303).